A 304-amino-acid chain; its full sequence is Glutaminase (304 aa).

Substrate contacts are provided by serine 63, asparagine 114, glutamate 158, asparagine 165, tyrosine 189, tyrosine 240, and valine 258.

The protein belongs to the glutaminase family. In terms of assembly, homotetramer.

The enzyme catalyses L-glutamine + H2O = L-glutamate + NH4(+). The polypeptide is Glutaminase (Shewanella baltica (strain OS185)).